The following is a 104-amino-acid chain: uncharacterized protein (104 aa).

Transmembrane regions (helical) follow at residues 45 to 65 (LYGIFSCFLLFYSLKDLIGVF) and 70 to 90 (LYLSILLLWLLVLLFCLAKGL).

Its subcellular location is the membrane. This is an uncharacterized protein from Saccharomyces cerevisiae (strain ATCC 204508 / S288c) (Baker's yeast).